We begin with the raw amino-acid sequence, 369 residues long: Actin-related protein T3 (369 aa).

Belongs to the actin family. As to quaternary structure, interacts with PFN3. Testis specific (at protein level). Expressed specifically in haploid germ cells.

Its subcellular location is the cytoplasm. It is found in the cytoskeleton. The protein resides in the nucleus. The sequence is that of Actin-related protein T3 (Actrt3) from Mus musculus (Mouse).